Here is a 362-residue protein sequence, read N- to C-terminus: MSEVTDKTVEFLLRHSASRRPPDIGSLKEKAFERVNWRDAFDRFQETERLTLWETKSELDGVDEGAYRVARDALFPFAVSGSQGAVSFGNRAGHKLREVMEATGVWEHLQRETSGQKGAVVFADVCGGPGAFSQALFEMSRQYKLRMRGFGMTLRNVRGLDWYSSLPLGKFLPTYGIDGTGDIFNLANIEALLSLTIRERLKLVVADGGFNVPFNIANYQETLSGRILFGQWLAALKLLRPGGCFILKLFDTFSPLSRALLYLSTYLYDRVHVVKPRHSRVVNSERYLVCLGFLGTPGPWMEYFEHCYQVGFSDNDSIPKIMPTSWVMEDKTFMKDLKQMNSTIASNQTLALKMVLAKLQPS.

The RrmJ-type SAM-dependent 2'-O-MTase domain maps to 87–294; sequence SFGNRAGHKL…ERYLVCLGFL (208 aa). Residues Gly-130 and Asp-207 each coordinate S-adenosyl-L-methionine. Catalysis depends on Lys-248, which acts as the Proton acceptor.

It is found in the nucleus. It carries out the reaction a 5'-end (N(7)-methyl 5'-triphosphoguanosine)-ribonucleoside in mRNA + S-adenosyl-L-methionine = a 5'-end (N(7)-methyl 5'-triphosphoguanosine)-(2'-O-methyl-ribonucleoside) in mRNA + S-adenosyl-L-homocysteine + H(+). In terms of biological role, S-adenosyl-L-methionine-dependent methyltransferase that mediates RNA cap1 2'-O-ribose methylation to the 5'-cap structure of spliced leader and U1 small nuclear RNAs. Methylates the ribose of the first nucleotide of a m(7)GpppG-capped RNA to produce m(7)GpppNmp (cap1). Cap1 modification is linked to higher levels of translation. Recognizes a guanosine cap on RNA independent of its N(7) methylation status. The protein is Cap-specific mRNA (nucleoside-2'-O-)-methyltransferase 1 of Trypanosoma cruzi (strain CL Brener).